The sequence spans 235 residues: Sugar fermentation stimulation protein homolog (235 aa).

Belongs to the SfsA family.

The protein is Sugar fermentation stimulation protein homolog of Maricaulis maris (strain MCS10) (Caulobacter maris).